A 188-amino-acid chain; its full sequence is Elongation factor P (188 aa).

This sequence belongs to the elongation factor P family.

The protein resides in the cytoplasm. Its pathway is protein biosynthesis; polypeptide chain elongation. In terms of biological role, involved in peptide bond synthesis. Stimulates efficient translation and peptide-bond synthesis on native or reconstituted 70S ribosomes in vitro. Probably functions indirectly by altering the affinity of the ribosome for aminoacyl-tRNA, thus increasing their reactivity as acceptors for peptidyl transferase. This Anaplasma marginale (strain Florida) protein is Elongation factor P.